The primary structure comprises 874 residues: Valine--tRNA ligase (874 aa).

Residues Met-1–Pro-22 are disordered. The 'HIGH' region signature appears at Pro-57 to His-67. Positions Lys-531–Ser-535 match the 'KMSKS' region motif. Lys-534 contributes to the ATP binding site. The stretch at Val-805–Leu-871 forms a coiled coil.

The protein belongs to the class-I aminoacyl-tRNA synthetase family. ValS type 1 subfamily. As to quaternary structure, monomer.

Its subcellular location is the cytoplasm. The catalysed reaction is tRNA(Val) + L-valine + ATP = L-valyl-tRNA(Val) + AMP + diphosphate. Catalyzes the attachment of valine to tRNA(Val). As ValRS can inadvertently accommodate and process structurally similar amino acids such as threonine, to avoid such errors, it has a 'posttransfer' editing activity that hydrolyzes mischarged Thr-tRNA(Val) in a tRNA-dependent manner. The sequence is that of Valine--tRNA ligase from Streptomyces coelicolor (strain ATCC BAA-471 / A3(2) / M145).